Consider the following 441-residue polypeptide: Deoxyguanosinetriphosphate triphosphohydrolase-like protein 1 (441 aa).

Residues 62-255 (RLTHSLEAAQ…MELADDIAYG (194 aa)) form the HD domain.

This sequence belongs to the dGTPase family. Type 2 subfamily.

This chain is Deoxyguanosinetriphosphate triphosphohydrolase-like protein 1, found in Vibrio cholerae serotype O1 (strain ATCC 39315 / El Tor Inaba N16961).